A 379-amino-acid chain; its full sequence is CCN family member 1 (379 aa).

The signal sequence occupies residues 1-24; it reads MSSSTIKTLAVAVTLLHLTRLALS. The region spanning 25–94 is the IGFBP N-terminal domain; that stretch reads TCPAACHCPL…TALKGICRAQ (70 aa). Disulfide bonds link C26–C50, C30–C52, C32–C53, C39–C56, C64–C78, and C70–C91. The VWFC domain occupies 98-164; that stretch reads RPCEYNSRIY…GQCCEEWVCD (67 aa). S184 is modified (phosphoserine). Positions 226–271 constitute a TSP type-1 domain; that stretch reads KCIVQTTSWSQCSKSCGTGISTRVTNDNSECRLVKETRICEVRPCG. The interval 277–313 is heparin-binding; it reads SLKKGKKCSKTKKSPEPVRFTYAGCSSVKKYRPKYCG. Cystine bridges form between C284/C321, C301/C335, C312/C351, C315/C353, and C320/C357. The region spanning 284–358 is the CTCK domain; the sequence is CSKTKKSPEP…QSCKCNYNCP (75 aa).

It belongs to the CCN family. Interaction with integrins is heparin- and cell-type-dependent and promotes cell adhesion.

The protein localises to the secreted. Functionally, promotes cell proliferation, chemotaxis, angiogenesis and cell adhesion. Appears to play a role in wound healing by up-regulating, in skin fibroblasts, the expression of a number of genes involved in angiogenesis, inflammation and matrix remodeling including VEGA-A, VEGA-C, MMP1, MMP3, TIMP1, uPA, PAI-1 and integrins alpha-3 and alpha-5. CCN1-mediated gene regulation is dependent on heparin-binding. Down-regulates the expression of alpha-1 and alpha-2 subunits of collagen type-1. Promotes cell adhesion and adhesive signaling through integrin alpha-6/beta-1, cell migration through integrin alpha-1/beta-5 and cell proliferation through integrin alpha-v/beta-3. The sequence is that of CCN family member 1 from Rattus norvegicus (Rat).